A 932-amino-acid chain; its full sequence is Glycine dehydrogenase (decarboxylating) (932 aa).

Lysine 685 carries the N6-(pyridoxal phosphate)lysine modification.

This sequence belongs to the GcvP family. As to quaternary structure, the glycine cleavage system is composed of four proteins: P, T, L and H. Requires pyridoxal 5'-phosphate as cofactor.

The enzyme catalyses N(6)-[(R)-lipoyl]-L-lysyl-[glycine-cleavage complex H protein] + glycine + H(+) = N(6)-[(R)-S(8)-aminomethyldihydrolipoyl]-L-lysyl-[glycine-cleavage complex H protein] + CO2. The glycine cleavage system catalyzes the degradation of glycine. The P protein binds the alpha-amino group of glycine through its pyridoxal phosphate cofactor; CO(2) is released and the remaining methylamine moiety is then transferred to the lipoamide cofactor of the H protein. The sequence is that of Glycine dehydrogenase (decarboxylating) from Brucella suis (strain ATCC 23445 / NCTC 10510).